A 552-amino-acid polypeptide reads, in one-letter code: Indole-3-pyruvate decarboxylase (552 aa).

Residue Glu52 participates in thiamine diphosphate binding. Residues 385–466 (TSAFGAIDLR…ILVLNNEGYT (82 aa)) form a thiamine pyrophosphate binding region. Asp435 and Asn462 together coordinate Mg(2+).

This sequence belongs to the TPP enzyme family. Homotetramer. The cofactor is a metal cation. Thiamine diphosphate is required as a cofactor.

The catalysed reaction is indole-3-pyruvate + H(+) = indole-3-acetaldehyde + CO2. It participates in plant hormone metabolism; auxin biosynthesis. This Enterobacter cloacae protein is Indole-3-pyruvate decarboxylase (ipdC).